The following is a 1150-amino-acid chain: ETARPSVAGSGTTGTVSGASGSTGSSSGSTGATGASIGQPETSRISVAGSSGAPAVSSGASQAAGTSGAGPGTTASSVGVTETARPSVAGSGTTGTVSGASGSTGSSSGSPGATGASIGQPETSRISVAGSSGAPAVSSGASQAAGTSGAGPGTTASSVGVTETARPSVAGSGTTGTVSGASGSTGSSSGSPGATGASIGQPETSRISVAGSSGAPAVSSGASQAAGTSGAGPGTTASSVGVTETARPSVAGSGTTGTVSGASGSTGSSSGSPGATGASIGQPETSRISVAGSSGAPAVSSGASQAAGTSGAGPGTTASSVGVTETARPSVAGSGTTGTVSGASGSTGSSSGSPGATGASIGQPETSRISVAGSSGAPAVSSGASQAAGTSEATTSIEGAGTSGVGFKTEATTFPGENETTRVGIATGTTGIVSRKTLEPGSYNTEATTSIGRSGTTHTDLPGGTTIVLPGFSHSSQSSKPGSSVTTPGSPESGSETGTSGEFSTTVISGSSHTEATTFIGGSGSPGTGSRPGTTGELSGTTIASGNATTEATTSTETRIGPQTGAQTTVPGSQVSGSETGTSEAVSNPAIASGSSSTGTTSGASDSQVTGSRTGTTGVVLGTTVAPGSSSTGATTGVLINEGTRSTSLGTTRVASGTTYESGTSNSVPSGGSGTPGSGINTGGSSTQVTGIQTGTTAVGFGSTLLPGSSNTGATTSPSERTSPGSKTGITRVVSGTTVASGSSNTGATTSLGRGETTQGGIKIVITGVTVGTTVAPGSFNTKATTPTEVRAATGAGTAVGATSRSTGISTGPENSTPGTTETGSGTTSSPGGVKTEATTFKGVGTTEAGISSGNSPGSGGVTSSQEGTSREASETTTAPRISATGSTSVSKEITASPKVSSPETTAGATEDQENENKTGCPAPLPPPPVCHGPLGEEKSPGDVWTANCHKCTCTEAKTVDCKPKECPSPPTCKTGERLIKFKANDTCCEIGHCEKRTCLFNNTDYEVGSSFDDPNNPCVTYSCQNTGFTAVVQNCPKQTWCAEEDRVYDSKQCCYTCKSSCKPSPVNVTVRYNGCTIKVEMARCVGECKKTVTYDYDIFQLKNSCLCCQEEDYEFRDIVLDCPDGSTLPYRYRHITACSCLDPCQQSMT.

2 stretches are compositionally biased toward low complexity: residues 1 to 36 (ETARPSVAGSGTTGTVSGASGSTGSSSGSTGATGAS) and 46 to 79 (SVAGSSGAPAVSSGASQAAGTSGAGPGTTASSVG). A run of 5 repeats spans residues 1-44 (ETAR…ETSR), 45-125 (ISVA…ETSR), 126-206 (ISVA…ETSR), 207-287 (ISVA…ETSR), and 288-368 (ISVA…ETSR). A 6 X 81 AA tandem repeats region spans residues 1 to 368 (ETARPSVAGS…ASIGQPETSR (368 aa)). Disordered stretches follow at residues 1 to 730 (ETAR…KTGI) and 776 to 925 (APGS…PAPL). Residues Ser-46, Ser-50, Ser-51, Ser-57, Ser-58, and Ser-61 are each glycosylated (O-linked (GalNAc...) serine; partial). A glycan (O-linked (GalNAc...) threonine; partial) is linked at Thr-66. An O-linked (GalNAc...) serine; partial glycan is attached at Ser-67. 2 O-linked (GalNAc...) threonine; partial glycosylation sites follow: Thr-73 and Thr-74. Ser-76 and Ser-77 each carry an O-linked (GalNAc...) serine; partial glycan. Residues Thr-81 and Thr-83 are each glycosylated (O-linked (GalNAc...) threonine; partial). Residues 86–117 (PSVAGSGTTGTVSGASGSTGSSSGSPGATGAS) are compositionally biased toward low complexity. Ser-87 and Ser-91 each carry an O-linked (GalNAc...) serine; partial glycan. O-linked (GalNAc...) threonine; partial glycans are attached at residues Thr-93, Thr-94, and Thr-96. O-linked (GalNAc...) serine; partial glycans are attached at residues Ser-98, Ser-101, and Ser-103. O-linked (GalNAc...) threonine; partial glycosylation is present at Thr-104. O-linked (GalNAc...) serine; partial glycosylation is found at Ser-106, Ser-107, Ser-108, and Ser-110. The O-linked (GalNAc...) threonine; partial glycan is linked to Thr-114. The O-linked (GalNAc...) serine; partial glycan is linked to Ser-117. The O-linked (GalNAc...) threonine; partial glycan is linked to Thr-123. Residue Ser-124 is glycosylated (O-linked (GalNAc...) serine; partial). Composition is skewed to low complexity over residues 127–160 (SVAGSSGAPAVSSGASQAAGTSGAGPGTTASSVG), 167–198 (PSVAGSGTTGTVSGASGSTGSSSGSPGATGAS), 208–241 (SVAGSSGAPAVSSGASQAAGTSGAGPGTTASSVG), 248–279 (PSVAGSGTTGTVSGASGSTGSSSGSPGATGAS), 289–322 (SVAGSSGAPAVSSGASQAAGTSGAGPGTTASSVG), 329–360 (PSVAGSGTTGTVSGASGSTGSSSGSPGATGAS), and 370–396 (SVAGSSGAPAVSSGASQAAGTSEATTS). One copy of the 6; truncated repeat lies at 369-391 (ISVAGSSGAPAVSSGASQAAGTS). Asn-418 carries an N-linked (GlcNAc...) asparagine glycan. Positions 442 to 459 (SYNTEATTSIGRSGTTHT) are enriched in polar residues. Residues 473-506 (SHSSQSSKPGSSVTTPGSPESGSETGTSGEFSTT) show a composition bias toward low complexity. Composition is skewed to polar residues over residues 507-517 (VISGSSHTEAT) and 537-547 (ELSGTTIASGN). Asn-547 carries N-linked (GlcNAc...) asparagine glycosylation. A compositionally biased stretch (low complexity) spans 548-558 (ATTEATTSTET). Residues 564 to 586 (TGAQTTVPGSQVSGSETGTSEAV) show a composition bias toward polar residues. Residues 590-625 (AIASGSSSTGTTSGASDSQVTGSRTGTTGVVLGTTV) are compositionally biased toward low complexity. Polar residues-rich tracts occupy residues 626-635 (APGSSSTGAT) and 643-661 (GTRSTSLGTTRVASGTTYE). A compositionally biased stretch (gly residues) spans 671 to 682 (GGSGTPGSGINT). Composition is skewed to polar residues over residues 688 to 697 (QVTGIQTGTT), 706 to 729 (LPGSSNTGATTSPSERTSPGSKTG), and 779 to 788 (SFNTKATTPT). Residues 790-833 (VRAATGAGTAVGATSRSTGISTGPENSTPGTTETGSGTTSSPGG) are compositionally biased toward low complexity. The span at 875 to 908 (ETTTAPRISATGSTSVSKEITASPKVSSPETTAG) shows a compositional bias: polar residues. Residues Asn-917, Asn-985, Asn-1002, and Asn-1068 are each glycosylated (N-linked (GlcNAc...) asparagine). The VWFC domain occupies 929–995 (PVCHGPLGEE…DTCCEIGHCE (67 aa)). Disulfide bonds link Cys-1062-Cys-1109, Cys-1076-Cys-1123, Cys-1085-Cys-1139, and Cys-1089-Cys-1141. One can recognise a CTCK domain in the interval 1062 to 1146 (CKPSPVNVTV…TACSCLDPCQ (85 aa)).

Intermolecular disulfide bonds could help maintain a multimeric mucin structure. Extensively O-glycosylated on most but not all Ser and Thr residues of the repeat units. Highest glycosylation appears to occur on Ser residues which have Gly at positions at +2 or -2 from the glycosylation site or, where Gly is the penultimate residue. The presence of proline (usually at position +3 or -3) appears to also enhance glycosylation. As to expression, submaxillary mucosae.

The protein resides in the secreted. Apomucin is part of mucin, the major glycoprotein synthesized and secreted by mucous cells of the submaxillary gland. Its highly viscous aqueous solutions serve to lubricate the oral cavity and to protect it from the external environment. The chain is Apomucin from Sus scrofa (Pig).